The chain runs to 932 residues: Glycine dehydrogenase (decarboxylating) (932 aa).

Lysine 685 is modified (N6-(pyridoxal phosphate)lysine).

This sequence belongs to the GcvP family. As to quaternary structure, the glycine cleavage system is composed of four proteins: P, T, L and H. The cofactor is pyridoxal 5'-phosphate.

The catalysed reaction is N(6)-[(R)-lipoyl]-L-lysyl-[glycine-cleavage complex H protein] + glycine + H(+) = N(6)-[(R)-S(8)-aminomethyldihydrolipoyl]-L-lysyl-[glycine-cleavage complex H protein] + CO2. Functionally, the glycine cleavage system catalyzes the degradation of glycine. The P protein binds the alpha-amino group of glycine through its pyridoxal phosphate cofactor; CO(2) is released and the remaining methylamine moiety is then transferred to the lipoamide cofactor of the H protein. This Brucella suis biovar 1 (strain 1330) protein is Glycine dehydrogenase (decarboxylating).